The primary structure comprises 276 residues: MESISWNTPSVRDALAAVKRDAPFIYGLTNYVAANLSANVLLAVGAAPAIGAAADWPARFGAGANALWINTAALMSSGADTLLTAARAASKAGTRWVLDPVALGAGAPEYDAIVRDLLALRPTVIRGNASELIALAGGTAAGKGVDTTASPESALAFIGDLARRSGAVVSVSGPTDYVTDGVATLAVAGGDARLTRVTGAGCALGALIAALLAQRGAALAAASAAHAIYATAAERAADARGTASFAVRFVDELSLLDPAESSRDRSAGQIGAKRRE.

ATP is bound by residues Arg126 and Ser172. Gly199 serves as a coordination point for substrate.

This sequence belongs to the Thz kinase family. Mg(2+) is required as a cofactor.

It catalyses the reaction 5-(2-hydroxyethyl)-4-methylthiazole + ATP = 4-methyl-5-(2-phosphooxyethyl)-thiazole + ADP + H(+). It functions in the pathway cofactor biosynthesis; thiamine diphosphate biosynthesis; 4-methyl-5-(2-phosphoethyl)-thiazole from 5-(2-hydroxyethyl)-4-methylthiazole: step 1/1. Its function is as follows. Catalyzes the phosphorylation of the hydroxyl group of 4-methyl-5-beta-hydroxyethylthiazole (THZ). This Burkholderia pseudomallei (strain 1710b) protein is Hydroxyethylthiazole kinase.